A 101-amino-acid polypeptide reads, in one-letter code: Small ribosomal subunit protein uS14 (101 aa).

It belongs to the universal ribosomal protein uS14 family. As to quaternary structure, part of the 30S ribosomal subunit. Contacts proteins S3 and S10.

Functionally, binds 16S rRNA, required for the assembly of 30S particles and may also be responsible for determining the conformation of the 16S rRNA at the A site. The protein is Small ribosomal subunit protein uS14 of Psychrobacter arcticus (strain DSM 17307 / VKM B-2377 / 273-4).